The sequence spans 635 residues: Threonine--tRNA ligase (635 aa).

The 61-residue stretch at 1–61 folds into the TGS domain; it reads MVSIRLPDGS…DRDASLAIVT (61 aa). Positions 242-533 are catalytic; that stretch reads DHRKLGKQLD…LIEHHAGAMP (292 aa). Positions 333, 384, and 510 each coordinate Zn(2+).

The protein belongs to the class-II aminoacyl-tRNA synthetase family. Homodimer. It depends on Zn(2+) as a cofactor.

Its subcellular location is the cytoplasm. It catalyses the reaction tRNA(Thr) + L-threonine + ATP = L-threonyl-tRNA(Thr) + AMP + diphosphate + H(+). Functionally, catalyzes the attachment of threonine to tRNA(Thr) in a two-step reaction: L-threonine is first activated by ATP to form Thr-AMP and then transferred to the acceptor end of tRNA(Thr). Also edits incorrectly charged L-seryl-tRNA(Thr). This chain is Threonine--tRNA ligase, found in Burkholderia cenocepacia (strain ATCC BAA-245 / DSM 16553 / LMG 16656 / NCTC 13227 / J2315 / CF5610) (Burkholderia cepacia (strain J2315)).